The sequence spans 301 residues: Ribosomal protein L11 methyltransferase (301 aa).

Residues Thr130, Gly151, Asp172, and Asn239 each contribute to the S-adenosyl-L-methionine site.

This sequence belongs to the methyltransferase superfamily. PrmA family.

It is found in the cytoplasm. It carries out the reaction L-lysyl-[protein] + 3 S-adenosyl-L-methionine = N(6),N(6),N(6)-trimethyl-L-lysyl-[protein] + 3 S-adenosyl-L-homocysteine + 3 H(+). Functionally, methylates ribosomal protein L11. In Campylobacter hominis (strain ATCC BAA-381 / DSM 21671 / CCUG 45161 / LMG 19568 / NCTC 13146 / CH001A), this protein is Ribosomal protein L11 methyltransferase.